The following is a 799-amino-acid chain: Potassium transporter 21 (799 aa).

Residues 1–56 (MDPGVEKKKQQMELVDVESGGLPVERQDSLFREAVRAEHAGAAHWDEQDSWGRTMS) are Cytoplasmic-facing. A helical membrane pass occupies residues 57 to 77 (LAFQCVGILYGDIGTSSLYVY). Residues 78–93 (SSTFEHGIGHPDDVVG) are Extracellular-facing. Residues 94–114 (VLSLIVYSFMLFTVIKIVFVA) form a helical membrane-spanning segment. Residues 115-181 (LHANDHGDGG…QLLEASKAAK (67 aa)) lie on the Cytoplasmic side of the membrane. The chain crosses the membrane as a helical span at residues 182 to 202 (ISLFLLTILAIAMVISDAVLT). The Extracellular portion of the chain corresponds to 203–219 (PPISVLSAVGGLREKVP). The helical transmembrane segment at 220-240 (HLTTDQIVWITVAILVVLFAI) threads the bilayer. The Cytoplasmic segment spans residues 241–251 (QRYGTDKVGYS). Residues 252 to 272 (FAPIILLWLLLIGATGLYNLI) traverse the membrane as a helical segment. The Extracellular segment spans residues 273–301 (KHDISVLRAFNPKYIIDYFRRNKKEGWVS). The helical transmembrane segment at 302–322 (LGSILLCFTGSEALFANLGYF) threads the bilayer. At 323–328 (SIRSIQ) the chain is on the cytoplasmic side. The helical transmembrane segment at 329–349 (LSFSFALLPSVLLTYIGQAAF) threads the bilayer. The Extracellular segment spans residues 350–362 (LSKNPKNVANTFF). Residues 363–383 (AATPISLFWPTFIMAIAASII) form a helical membrane-spanning segment. Over 384 to 420 (GSQAMISCAFATVSHLQSLSCFPRVKILHTSKRFPGQ) the chain is Cytoplasmic. The helical transmembrane segment at 421–441 (LYIPGVNFLLCVAACVVTVSF) threads the bilayer. Over 442–452 (KTTVIIGKAHE) the chain is Extracellular. The chain crosses the membrane as a helical span at residues 453–473 (ICVILVMIITTLLMTIVMLLV). Over 474–475 (WK) the chain is Cytoplasmic. Residues 476–496 (INILWVALFFITFTSTEAVYL) form a helical membrane-spanning segment. Topologically, residues 497–508 (SSVLYKFTHGPY) are extracellular. Residues 509–529 (VPVAMSVVLMVVMIVWHYVHV) traverse the membrane as a helical segment. Residues 530-799 (KRYKYELEHT…LLKVGISYEI (270 aa)) are Cytoplasmic-facing.

Belongs to the HAK/KUP transporter (TC 2.A.72.3) family.

The protein resides in the membrane. Its function is as follows. High-affinity potassium transporter. The polypeptide is Potassium transporter 21 (HAK21) (Oryza sativa subsp. japonica (Rice)).